Here is a 232-residue protein sequence, read N- to C-terminus: Putative ABC transporter ATP-binding protein VNG_2317G (232 aa).

The ABC transporter domain maps to 2–231; the sequence is LSVRNLVHRY…GALPDAGVRP (230 aa). Position 34 to 41 (34 to 41) interacts with ATP; the sequence is GANGSGKT.

It belongs to the ABC transporter superfamily.

It is found in the cell membrane. Probably part of an ABC transporter complex. Responsible for energy coupling to the transport system. This Halobacterium salinarum (strain ATCC 700922 / JCM 11081 / NRC-1) (Halobacterium halobium) protein is Putative ABC transporter ATP-binding protein VNG_2317G.